The sequence spans 216 residues: Imidazoleglycerol-phosphate dehydratase (216 aa).

The protein belongs to the imidazoleglycerol-phosphate dehydratase family.

The protein resides in the cytoplasm. It carries out the reaction D-erythro-1-(imidazol-4-yl)glycerol 3-phosphate = 3-(imidazol-4-yl)-2-oxopropyl phosphate + H2O. It participates in amino-acid biosynthesis; L-histidine biosynthesis; L-histidine from 5-phospho-alpha-D-ribose 1-diphosphate: step 6/9. The protein is Imidazoleglycerol-phosphate dehydratase of Nocardia farcinica (strain IFM 10152).